A 503-amino-acid chain; its full sequence is Maturase K (503 aa).

This sequence belongs to the intron maturase 2 family. MatK subfamily.

It localises to the plastid. It is found in the chloroplast. Its function is as follows. Usually encoded in the trnK tRNA gene intron. Probably assists in splicing its own and other chloroplast group II introns. In Lathyrus vestitus (Pacific pea), this protein is Maturase K.